The sequence spans 131 residues: Protein DfrA (131 aa).

This sequence belongs to the RutC family.

In Myxococcus xanthus, this protein is Protein DfrA (dfrA).